An 822-amino-acid chain; its full sequence is Penicillin-binding protein 1A (822 aa).

Residues 1-5 (MRLLK) are Cytoplasmic-facing. Residues 6-26 (FLWWTCVTLICGVLLSFSGAY) form a helical; Signal-anchor for type II membrane protein membrane-spanning segment. Topologically, residues 27 to 822 (LYLSPSLPSV…DDEGAPIDLF (796 aa)) are periplasmic. The tract at residues 48–216 (LKVYSEDGKL…SRYNPLVNPT (169 aa)) is transglycosylase. Glutamate 86 acts as the Proton donor; for transglycosylase activity in catalysis. Positions 403–744 (IRVQRQEDGT…GTVALPIWIR (342 aa)) are transpeptidase. Serine 461 functions as the Acyl-ester intermediate; for transpeptidase activity in the catalytic mechanism. Disordered regions lie at residues 614 to 654 (AADA…FEPT) and 790 to 822 (KNEDTPPSVNELPPGSFPGSPLPDDEGAPIDLF). The span at 812–822 (PDDEGAPIDLF) shows a compositional bias: acidic residues.

In the N-terminal section; belongs to the glycosyltransferase 51 family. This sequence in the C-terminal section; belongs to the transpeptidase family.

The protein localises to the cell inner membrane. The enzyme catalyses [GlcNAc-(1-&gt;4)-Mur2Ac(oyl-L-Ala-gamma-D-Glu-L-Lys-D-Ala-D-Ala)](n)-di-trans,octa-cis-undecaprenyl diphosphate + beta-D-GlcNAc-(1-&gt;4)-Mur2Ac(oyl-L-Ala-gamma-D-Glu-L-Lys-D-Ala-D-Ala)-di-trans,octa-cis-undecaprenyl diphosphate = [GlcNAc-(1-&gt;4)-Mur2Ac(oyl-L-Ala-gamma-D-Glu-L-Lys-D-Ala-D-Ala)](n+1)-di-trans,octa-cis-undecaprenyl diphosphate + di-trans,octa-cis-undecaprenyl diphosphate + H(+). It carries out the reaction Preferential cleavage: (Ac)2-L-Lys-D-Ala-|-D-Ala. Also transpeptidation of peptidyl-alanyl moieties that are N-acyl substituents of D-alanine.. It participates in cell wall biogenesis; peptidoglycan biosynthesis. Its function is as follows. Cell wall formation. Synthesis of cross-linked peptidoglycan from the lipid intermediates. The enzyme has a penicillin-insensitive transglycosylase N-terminal domain (formation of linear glycan strands) and a penicillin-sensitive transpeptidase C-terminal domain (cross-linking of the peptide subunits). The sequence is that of Penicillin-binding protein 1A (mrcA) from Pseudomonas aeruginosa (strain ATCC 15692 / DSM 22644 / CIP 104116 / JCM 14847 / LMG 12228 / 1C / PRS 101 / PAO1).